Consider the following 296-residue polypeptide: Light-independent protochlorophyllide reductase iron-sulfur ATP-binding protein (296 aa).

Residues G39–T44 and K68 each bind ATP. A Mg(2+)-binding site is contributed by S43. Positions 124 and 158 each coordinate [4Fe-4S] cluster. Residue N209 to R210 coordinates ATP.

It belongs to the NifH/BchL/ChlL family. Homodimer. Protochlorophyllide reductase is composed of three subunits; ChlL, ChlN and ChlB. [4Fe-4S] cluster is required as a cofactor.

The catalysed reaction is chlorophyllide a + oxidized 2[4Fe-4S]-[ferredoxin] + 2 ADP + 2 phosphate = protochlorophyllide a + reduced 2[4Fe-4S]-[ferredoxin] + 2 ATP + 2 H2O. It functions in the pathway porphyrin-containing compound metabolism; chlorophyll biosynthesis (light-independent). Functionally, component of the dark-operative protochlorophyllide reductase (DPOR) that uses Mg-ATP and reduced ferredoxin to reduce ring D of protochlorophyllide (Pchlide) to form chlorophyllide a (Chlide). This reaction is light-independent. The L component serves as a unique electron donor to the NB-component of the complex, and binds Mg-ATP. The chain is Light-independent protochlorophyllide reductase iron-sulfur ATP-binding protein from Prochlorococcus marinus (strain MIT 9211).